The following is a 324-amino-acid chain: 2-oxoisovalerate dehydrogenase subunit beta (324 aa).

Residues E29, L58–E60, Q82, and Y86–P89 each bind thiamine diphosphate. Substrate is bound by residues F83–Y86 and H129. H129 (proton acceptor) is an active-site residue.

In terms of assembly, heterotetramer of two alpha and two beta chains. Directly associated with ODBA in the E1 complex. The cofactor is thiamine diphosphate.

The enzyme catalyses N(6)-[(R)-lipoyl]-L-lysyl-[protein] + 3-methyl-2-oxobutanoate + H(+) = N(6)-[(R)-S(8)-2-methylpropanoyldihydrolipoyl]-L-lysyl-[protein] + CO2. The branched-chain alpha-keto dehydrogenase complex catalyzes the overall conversion of alpha-keto acids to acyl-CoA and CO(2). It contains multiple copies of three enzymatic components: branched-chain alpha-keto acid decarboxylase (E1), lipoamide acyltransferase (E2) and lipoamide dehydrogenase (E3). The polypeptide is 2-oxoisovalerate dehydrogenase subunit beta (Thermus thermophilus (strain ATCC BAA-163 / DSM 7039 / HB27)).